A 315-amino-acid chain; its full sequence is Homoserine kinase (315 aa).

97–107 (PPARGLGSSAT) provides a ligand contact to ATP.

This sequence belongs to the GHMP kinase family. Homoserine kinase subfamily.

The protein localises to the cytoplasm. It carries out the reaction L-homoserine + ATP = O-phospho-L-homoserine + ADP + H(+). Its pathway is amino-acid biosynthesis; L-threonine biosynthesis; L-threonine from L-aspartate: step 4/5. Catalyzes the ATP-dependent phosphorylation of L-homoserine to L-homoserine phosphate. This Synechococcus sp. (strain CC9311) protein is Homoserine kinase.